A 310-amino-acid polypeptide reads, in one-letter code: 17-beta-hydroxysteroid dehydrogenase type 3 (310 aa).

48–77 (GQWAVITGAGDGIGKAYSFELAKRGLNVVL) lines the NADP(+) pocket. Ser185 contributes to the substrate binding site. Catalysis depends on Tyr198, which acts as the Proton acceptor.

It belongs to the short-chain dehydrogenases/reductases (SDR) family. 17-beta-HSD 3 subfamily. In terms of tissue distribution, testis.

It is found in the endoplasmic reticulum. The catalysed reaction is a 17beta-hydroxy steroid + NADP(+) = a 17-oxo steroid + NADPH + H(+). It carries out the reaction testosterone + NADP(+) = androst-4-ene-3,17-dione + NADPH + H(+). The enzyme catalyses 17beta-estradiol + NADP(+) = estrone + NADPH + H(+). It catalyses the reaction 3beta-hydroxyandrost-5-en-17-one + NADPH + H(+) = androst-5-en-3beta,17beta-diol + NADP(+). The catalysed reaction is 17beta-hydroxy-5alpha-androstan-3-one + NADP(+) = 5alpha-androstan-3,17-dione + NADPH + H(+). It carries out the reaction androsterone + NADPH + H(+) = 5alpha-androstane-3alpha,17beta-diol + NADP(+). The enzyme catalyses 3beta-hydroxy-5alpha-androstan-17-one + NADPH + H(+) = 5alpha-androstane-3beta,17beta-diol + NADP(+). It catalyses the reaction androst-4-ene-3,11,17-trione + NADPH + H(+) = 17beta-hydroxyandrost-4-ene-3,11-dione + NADP(+). The catalysed reaction is 11beta-hydroxyandrost-4-ene-3,17-dione + NADPH + H(+) = 11beta,17beta-dihydroxyandrost-4-ene-3-one + NADP(+). It functions in the pathway hormone biosynthesis; testosterone biosynthesis. The protein operates within steroid metabolism. Its function is as follows. Catalyzes the conversion of 17-oxosteroids to 17beta-hydroxysteroids. Favors the reduction of androstenedione to testosterone. Testosterone is the key androgen driving male development and function. Uses NADPH while the two other EDH17B enzymes use NADH. Androgens such as epiandrosterone, dehydroepiandrosterone, androsterone and androstanedione are accepted as substrates and reduced at C-17. Can reduce 11-ketoandrostenedione as well as 11beta-hydroxyandrostenedione at C-17 to the respective testosterone forms. The sequence is that of 17-beta-hydroxysteroid dehydrogenase type 3 from Homo sapiens (Human).